Reading from the N-terminus, the 283-residue chain is Protease HtpX (283 aa).

Helical transmembrane passes span 4–24 and 33–53; these read ILLF…ILSV and GGIL…SLFL. His-139 serves as a coordination point for Zn(2+). Glu-140 is a catalytic residue. His-143 is a binding site for Zn(2+). 2 consecutive transmembrane segments (helical) span residues 147–167 and 190–210; these read GDMV…IFLS and IYFL…SIIA. A Zn(2+)-binding site is contributed by Glu-218.

It belongs to the peptidase M48B family. Requires Zn(2+) as cofactor.

Its subcellular location is the cell inner membrane. The chain is Protease HtpX from Haemophilus influenzae (strain PittEE).